Here is a 253-residue protein sequence, read N- to C-terminus: 5'-nucleotidase SurE (253 aa).

A divalent metal cation-binding residues include aspartate 8, aspartate 9, serine 39, and asparagine 92.

It belongs to the SurE nucleotidase family. A divalent metal cation serves as cofactor.

The protein resides in the cytoplasm. The enzyme catalyses a ribonucleoside 5'-phosphate + H2O = a ribonucleoside + phosphate. Nucleotidase that shows phosphatase activity on nucleoside 5'-monophosphates. The chain is 5'-nucleotidase SurE from Burkholderia pseudomallei (strain 668).